The primary structure comprises 463 residues: Exodeoxyribonuclease 7 large subunit (463 aa).

The protein belongs to the XseA family. Heterooligomer composed of large and small subunits.

The protein localises to the cytoplasm. It carries out the reaction Exonucleolytic cleavage in either 5'- to 3'- or 3'- to 5'-direction to yield nucleoside 5'-phosphates.. Its function is as follows. Bidirectionally degrades single-stranded DNA into large acid-insoluble oligonucleotides, which are then degraded further into small acid-soluble oligonucleotides. This chain is Exodeoxyribonuclease 7 large subunit, found in Klebsiella pneumoniae (strain 342).